The sequence spans 588 residues: Adenine deaminase (588 aa).

The protein belongs to the metallo-dependent hydrolases superfamily. Adenine deaminase family. Homodimer. The cofactor is Mn(2+).

The catalysed reaction is adenine + H2O + H(+) = hypoxanthine + NH4(+). In Escherichia coli (strain K12 / DH10B), this protein is Adenine deaminase.